We begin with the raw amino-acid sequence, 481 residues long: Glutamyl-tRNA(Gln) amidotransferase subunit A (481 aa).

Active-site charge relay system residues include Lys76 and Ser151. Ser175 serves as the catalytic Acyl-ester intermediate.

Belongs to the amidase family. GatA subfamily. Heterotrimer of A, B and C subunits.

It catalyses the reaction L-glutamyl-tRNA(Gln) + L-glutamine + ATP + H2O = L-glutaminyl-tRNA(Gln) + L-glutamate + ADP + phosphate + H(+). Allows the formation of correctly charged Gln-tRNA(Gln) through the transamidation of misacylated Glu-tRNA(Gln) in organisms which lack glutaminyl-tRNA synthetase. The reaction takes place in the presence of glutamine and ATP through an activated gamma-phospho-Glu-tRNA(Gln). The protein is Glutamyl-tRNA(Gln) amidotransferase subunit A of Neisseria meningitidis serogroup A / serotype 4A (strain DSM 15465 / Z2491).